A 376-amino-acid chain; its full sequence is DNA replication and repair protein RecF (376 aa).

ATP is bound at residue 30 to 37 (GNNAQGKS).

The protein belongs to the RecF family.

It is found in the cytoplasm. Functionally, the RecF protein is involved in DNA metabolism; it is required for DNA replication and normal SOS inducibility. RecF binds preferentially to single-stranded, linear DNA. It also seems to bind ATP. The protein is DNA replication and repair protein RecF of Nostoc sp. (strain PCC 7120 / SAG 25.82 / UTEX 2576).